The following is a 377-amino-acid chain: MGAAVTLNRIKIAPGIADIRDKYMELGFNYPEYNRAVKFAEESYTYYYETSPGEIKPKFCLIDGMSIDHCSSFIVPEFAKQYVLIHGEPCSSFKFRPGSLIYYQNEVTPEYIKDLKHATDYIASGQRCHFIKKDYLLGDSDSVAKCCSKTNTKHCPKIFNNNYKTEHCDDFMTGFCRNDPGNPNCLEWLRAKRKPAMSTYSDICSKHMDARYCSEFIRIIRPDYFTFGDTALYVFCNDHKGNRNCWCANYPKSNSGDKYLGPRVCWLHECTDESRDRKWLYYNQDVQRTRCKYVGCTINVNSLALKNSQAELTSNCTRTTSAVGDVHPGEPVVKDKIKLPTWLGAAITLVVISVIFYFISIYSRTKIKTNDINVRRR.

Glycine 2 carries the N-myristoyl glycine; by host lipid modification. Topologically, residues 2 to 341 (GAAVTLNRIK…VVKDKIKLPT (340 aa)) are virion surface. A helical; Signal-anchor for type II membrane protein transmembrane segment spans residues 342–362 (WLGAAITLVVISVIFYFISIY). The Intravirion portion of the chain corresponds to 363-377 (SRTKIKTNDINVRRR).

Belongs to the poxviridae A16/G9/J5 family. Part of a stable entry-fusion complex (EFC) which is at least composed of proteins A16, A21, A28, G3, G9, H2, J5, and L5. Formation of the viral membrane is necessary for the assembly of the complex. Interacts with G9. In terms of processing, most cysteines are linked by disulfide bonds. They are created by the viral disulfide bond formation pathway, a poxvirus-specific redox pathway that operates on the cytoplasmic side of the MV membranes.

Its subcellular location is the virion membrane. Its function is as follows. Envelope protein part of the entry-fusion complex responsible for the virus membrane fusion with host cell membrane during virus entry. Also plays a role in cell-cell fusion (syncytium formation). The chain is Virion membrane protein A16 from Homo sapiens (Human).